The following is a 185-amino-acid chain: Ribosome-recycling factor (185 aa).

It belongs to the RRF family.

It is found in the cytoplasm. In terms of biological role, responsible for the release of ribosomes from messenger RNA at the termination of protein biosynthesis. May increase the efficiency of translation by recycling ribosomes from one round of translation to another. This chain is Ribosome-recycling factor, found in Mycobacterium bovis (strain BCG / Pasteur 1173P2).